Reading from the N-terminus, the 433-residue chain is Phosphomethylpyrimidine synthase (433 aa).

Substrate contacts are provided by residues Asn-66, Met-94, Tyr-123, His-162, 184-186 (SRG), 225-228 (DALR), and Glu-264. Residue His-268 participates in Zn(2+) binding. Tyr-291 serves as a coordination point for substrate. A Zn(2+)-binding site is contributed by His-332. Positions 408, 411, and 415 each coordinate [4Fe-4S] cluster.

Belongs to the ThiC family. Requires [4Fe-4S] cluster as cofactor.

It carries out the reaction 5-amino-1-(5-phospho-beta-D-ribosyl)imidazole + S-adenosyl-L-methionine = 4-amino-2-methyl-5-(phosphooxymethyl)pyrimidine + CO + 5'-deoxyadenosine + formate + L-methionine + 3 H(+). It participates in cofactor biosynthesis; thiamine diphosphate biosynthesis. Functionally, catalyzes the synthesis of the hydroxymethylpyrimidine phosphate (HMP-P) moiety of thiamine from aminoimidazole ribotide (AIR) in a radical S-adenosyl-L-methionine (SAM)-dependent reaction. This chain is Phosphomethylpyrimidine synthase, found in Saccharolobus islandicus (strain M.16.27) (Sulfolobus islandicus).